The sequence spans 567 residues: Urease subunit alpha (567 aa).

One can recognise a Urease domain in the interval 128 to 567 (GGVDTHVHYI…LPLAQRYHLF (440 aa)). 3 residues coordinate Ni(2+): H133, H135, and K216. K216 is modified (N6-carboxylysine). H218 contacts substrate. Residues H245 and H271 each contribute to the Ni(2+) site. The Proton donor role is filled by H319. Ni(2+) is bound at residue D359.

The protein belongs to the metallo-dependent hydrolases superfamily. Urease alpha subunit family. Heterotrimer of UreA (gamma), UreB (beta) and UreC (alpha) subunits. Three heterotrimers associate to form the active enzyme. It depends on Ni cation as a cofactor. Post-translationally, carboxylation allows a single lysine to coordinate two nickel ions.

The protein localises to the cytoplasm. It catalyses the reaction urea + 2 H2O + H(+) = hydrogencarbonate + 2 NH4(+). The protein operates within nitrogen metabolism; urea degradation; CO(2) and NH(3) from urea (urease route): step 1/1. This is Urease subunit alpha from Pseudoalteromonas translucida (strain TAC 125).